Here is a 326-residue protein sequence, read N- to C-terminus: Siroheme decarboxylase NirDL subunit (326 aa).

This sequence belongs to the Ahb/Nir family. Forms a complex composed of NirDL, NirG and NirH. All proteins are required for the total conversion of siroheme to didecarboxysiroheme.

It carries out the reaction siroheme + 2 H(+) = 12,18-didecarboxysiroheme + 2 CO2. It participates in porphyrin-containing compound metabolism. Functionally, involved in heme d1 biosynthesis. Catalyzes the decarboxylation of siroheme into didecarboxysiroheme. Siroheme is probably decarboxylated to monodecarboxysiroheme, which is in turn decarboxylated to didecarboxysiroheme. This chain is Siroheme decarboxylase NirDL subunit, found in Paracoccus pantotrophus (Thiosphaera pantotropha).